The chain runs to 540 residues: Membrane protein insertase YidC (540 aa).

Residues 6-26 (NILLIALALVSFLLFQQWQVA) form a helical membrane-spanning segment. A compositionally biased stretch (low complexity) spans 36–47 (QAQSSSSLPAPS). Positions 36–63 (QAQSSSSLPAPSFADELDPVPGQQQASA) are disordered. Transmembrane regions (helical) follow at residues 342-362 (AFIQSFVGNWGVAIICLTFIV), 417-437 (LGGCLPLVLQMPIFIALYWAL), 455-475 (LSAQDPYYILPLLMGASMFLI), and 496-516 (PVMFTFFFLFFPSGLVLYWLV).

This sequence belongs to the OXA1/ALB3/YidC family. Type 1 subfamily. Interacts with the Sec translocase complex via SecD. Specifically interacts with transmembrane segments of nascent integral membrane proteins during membrane integration.

The protein resides in the cell inner membrane. Required for the insertion and/or proper folding and/or complex formation of integral membrane proteins into the membrane. Involved in integration of membrane proteins that insert both dependently and independently of the Sec translocase complex, as well as at least some lipoproteins. Aids folding of multispanning membrane proteins. The chain is Membrane protein insertase YidC from Vibrio parahaemolyticus serotype O3:K6 (strain RIMD 2210633).